The following is a 301-amino-acid chain: Probable aspartoacylase (301 aa).

Zn(2+) contacts are provided by His-13 and Glu-16. Substrate is bound by residues Arg-54 and 61 to 62 (NR). His-105 is a Zn(2+) binding site. Substrate contacts are provided by Glu-163 and Tyr-273.

The protein belongs to the AspA/AstE family. Aspartoacylase subfamily. Requires Zn(2+) as cofactor.

The catalysed reaction is an N-acyl-L-aspartate + H2O = a carboxylate + L-aspartate. This Prochlorococcus marinus (strain MIT 9301) protein is Probable aspartoacylase.